The primary structure comprises 240 residues: 2,3,4,5-tetrahydropyridine-2,6-dicarboxylate N-acetyltransferase (240 aa).

Belongs to the transferase hexapeptide repeat family. DapH subfamily.

The enzyme catalyses (S)-2,3,4,5-tetrahydrodipicolinate + acetyl-CoA + H2O = L-2-acetamido-6-oxoheptanedioate + CoA. It participates in amino-acid biosynthesis; L-lysine biosynthesis via DAP pathway; LL-2,6-diaminopimelate from (S)-tetrahydrodipicolinate (acetylase route): step 1/3. Catalyzes the transfer of an acetyl group from acetyl-CoA to tetrahydrodipicolinate. The chain is 2,3,4,5-tetrahydropyridine-2,6-dicarboxylate N-acetyltransferase from Shouchella clausii (strain KSM-K16) (Alkalihalobacillus clausii).